Here is a 76-residue protein sequence, read N- to C-terminus: Vasotab-TY2 (76 aa).

The signal sequence occupies residues 1–21; the sequence is MKFALFSVLVLMLIATFVAAD. The Kazal-like domain occupies 22–76; sequence DCPRICTADYTPVCGTPSGGRRSANRTFANQCGLDSHNCLNKGATYDKLHDGECK. 3 cysteine pairs are disulfide-bonded: Cys-23–Cys-60, Cys-27–Cys-53, and Cys-35–Cys-75.

In terms of tissue distribution, expressed by the salivary gland.

It localises to the secreted. Functionally, vasodilator protein that inhibits vasoconstriction of isolated rat femoral artery induced by phenylephrine. Since platelet aggregation and vasoconstriction are key hemostatic responses, particularly in small wounds, this protein likely participates in the antihemostatic responses during blood feeding. Blocks L-type calcium channels (Cav1/CACNA1) in left ventricular myocytes isolated from rat hearts. The protein is Vasotab-TY2 of Tabanus yao (Horsefly).